The chain runs to 1157 residues: DNA-directed RNA polymerase subunit beta (1157 aa).

It belongs to the RNA polymerase beta chain family. As to quaternary structure, the RNAP catalytic core consists of 2 alpha, 1 beta, 1 beta' and 1 omega subunit. When a sigma factor is associated with the core the holoenzyme is formed, which can initiate transcription.

The enzyme catalyses RNA(n) + a ribonucleoside 5'-triphosphate = RNA(n+1) + diphosphate. In terms of biological role, DNA-dependent RNA polymerase catalyzes the transcription of DNA into RNA using the four ribonucleoside triphosphates as substrates. The protein is DNA-directed RNA polymerase subunit beta of Tropheryma whipplei (Whipple's bacillus).